Consider the following 557-residue polypeptide: MKSDSMKEGLARAPHRSLLKSIGYTDEEIGRPIIGIVNSANEIVPGHADLNKIARAVKDGVYMAGGTPVEFSTIGVCDGIAMNHIGMKYSLGSRELIADSVEIMATAHAFDALVMIPNCDKIVPGMLMAAARLNLPTIFISGGPMLAGRYPGKPEKKVDLITVFEAVGAVKSGRMAPEELAIIEDAACPTCGSCSGMFTANSMNCLTEAIGMGLPGNGTVPAVMSERVRMAKQAGMRILDLLKNGVTPDKIMTAKAFRNALAVDMALGCSTNTVLHLPAIAHEAGVSISLDLINEISGIAPHLCSLSPAGPNHIEDLNMAGGIQAVLKELARKSGLIDPDCLTVTGRTVGENIASARDADGQVIRTLETPHHAQGGLAVLFGNLAPDGCVVKQSAVVDKMLVHEGPARVFDSEEDATTAIMDGRIKKGDVLVIRYEGPKGGPGMREMLTPTSALAGMGLDSTVALITDGRFSGGSRGAAIGHVSPEAMEGGPIAVVKEGDTITIDIPKKKIGLKLDAGEIQNRLSGWNRPAPKITRGYMARYADQVSSANTGAIFKK.

D78 contributes to the Mg(2+) binding site. C119 contacts [2Fe-2S] cluster. Residues D120 and K121 each coordinate Mg(2+). At K121 the chain carries N6-carboxylysine. C194 is a binding site for [2Fe-2S] cluster. E446 lines the Mg(2+) pocket. Catalysis depends on S472, which acts as the Proton acceptor.

The protein belongs to the IlvD/Edd family. As to quaternary structure, homodimer. The cofactor is [2Fe-2S] cluster. Mg(2+) serves as cofactor.

The catalysed reaction is (2R)-2,3-dihydroxy-3-methylbutanoate = 3-methyl-2-oxobutanoate + H2O. The enzyme catalyses (2R,3R)-2,3-dihydroxy-3-methylpentanoate = (S)-3-methyl-2-oxopentanoate + H2O. The protein operates within amino-acid biosynthesis; L-isoleucine biosynthesis; L-isoleucine from 2-oxobutanoate: step 3/4. It participates in amino-acid biosynthesis; L-valine biosynthesis; L-valine from pyruvate: step 3/4. Its function is as follows. Functions in the biosynthesis of branched-chain amino acids. Catalyzes the dehydration of (2R,3R)-2,3-dihydroxy-3-methylpentanoate (2,3-dihydroxy-3-methylvalerate) into 2-oxo-3-methylpentanoate (2-oxo-3-methylvalerate) and of (2R)-2,3-dihydroxy-3-methylbutanoate (2,3-dihydroxyisovalerate) into 2-oxo-3-methylbutanoate (2-oxoisovalerate), the penultimate precursor to L-isoleucine and L-valine, respectively. The chain is Dihydroxy-acid dehydratase from Desulfosudis oleivorans (strain DSM 6200 / JCM 39069 / Hxd3) (Desulfococcus oleovorans).